A 126-amino-acid chain; its full sequence is C-type natriuretic peptide 1 (126 aa).

Residues 1–22 (MLCPALLCAALLLLTPVEITDA) form the signal peptide. The propeptide occupies 23–104 (RALQQPSDAA…KRAEPDRSRR (82 aa)). Residues Cys-110 and Cys-126 are joined by a disulfide bond.

This sequence belongs to the natriuretic peptide family.

It localises to the secreted. Exhibits natriuretic and vasodepressant activity. Has cGMP-stimulating activity. May help to regulate body fluid homeostasis in a variety of aquatic environments. This chain is C-type natriuretic peptide 1, found in Takifugu rubripes (Japanese pufferfish).